Reading from the N-terminus, the 192-residue chain is MNAIWIAVAAVSLLGLAFGAILGYASRRFAVEDDPVVEKIDEILPQSQCGQCGYPGCRPYAETISCNGEKINRCAPGGEAVMLKIAELLNVEPQPLDGEAQELTPARMVAVIDENNCIGCTKCIQACPVDAIVGATRAMHTVMSDLCTGCNLCVDPCPTHCISLQPVAETPDSWKWDLNTIPVRIIPVEHHA.

The segment at 1–26 is hydrophobic; it reads MNAIWIAVAAVSLLGLAFGAILGYAS. The 60-residue stretch at 32-91 folds into the 4Fe-4S domain; sequence EDDPVVEKIDEILPQSQCGQCGYPGCRPYAETISCNGEKINRCAPGGEAVMLKIAELLNV. Positions 49, 52, 57, 74, 117, 120, 123, 127, 147, 150, 153, and 157 each coordinate [4Fe-4S] cluster. 2 consecutive 4Fe-4S ferredoxin-type domains span residues 108 to 137 and 138 to 167; these read MVAV…GATR and AMHT…LQPV.

The protein belongs to the 4Fe4S bacterial-type ferredoxin family. RnfB subfamily. In terms of assembly, the complex is composed of six subunits: RsxA, RsxB, RsxC, RsxD, RsxE and RsxG. The cofactor is [4Fe-4S] cluster.

The protein localises to the cell inner membrane. In terms of biological role, part of a membrane-bound complex that couples electron transfer with translocation of ions across the membrane. Required to maintain the reduced state of SoxR. The protein is Ion-translocating oxidoreductase complex subunit B of Escherichia coli O6:K15:H31 (strain 536 / UPEC).